An 88-amino-acid chain; its full sequence is uncharacterized protein (88 aa).

2 consecutive transmembrane segments (helical) span residues 8–28 (IFLS…SIFF) and 45–65 (ELLR…VINL).

The protein localises to the membrane. This is an uncharacterized protein from Saccharomyces cerevisiae (strain ATCC 204508 / S288c) (Baker's yeast).